Here is a 414-residue protein sequence, read N- to C-terminus: GA-binding protein subunit beta-2 (414 aa).

ANK repeat units follow at residues 5 to 34, 37 to 66, 70 to 99, 103 to 132, and 136 to 166; these read DLGKRLLEAARKGQDDEVRTLMANGAPFTT, LGTSPLHLAAQYGHYSTAEVLLRAGVSRDA, VDRTPLHMAAADGHVHIVELLVRSGADVNA, LQMTALHWATEHHHRDVVELLIKYGADVYA, and FDKSAFDIAMEKNNTEILVMLQEAMQNQVNT. Residue Ser-218 is modified to Phosphoserine. Residues 310 to 362 are a coiled coil; it reads EEMKEGSERELLQQQLQEANRRAQEYRHQLLKKEQEAEQYRLRLEAMAQQQTN.

In terms of assembly, heterotetramer of two alpha and two beta subunits. The C-terminal is necessary for the formation of a heterotetrameric GABP-alpha-2/beta-2 complex, and also facilitates homotypic dimerization. Interacts with ADGRB2. In terms of tissue distribution, high levels in thymus, spleen, kidney and intestine.

Its subcellular location is the nucleus. Its function is as follows. Transcription factor capable of interacting with purine rich repeats (GA repeats). Must associate with GABP-alpha to bind DNA. This chain is GA-binding protein subunit beta-2 (Gabpb2), found in Mus musculus (Mouse).